Reading from the N-terminus, the 592-residue chain is Leucine-rich repeat and immunoglobulin-like domain-containing nogo receptor-interacting protein 3 (592 aa).

An N-terminal signal peptide occupies residues 1 to 24 (MTCWLCVLSLPLLLLPAAPPPAGG). Residues 25-54 (CPARCECTVQTRAVACTRRRLTAVPDGIPA) form the LRRNT domain. Topologically, residues 25–531 (CPARCECTVQ…LDLTTILVST (507 aa)) are extracellular. LRR repeat units follow at residues 55 to 76 (ETRL…DLAA), 79 to 100 (ALEE…AFAN), 103 to 124 (RLRV…VFTR), 127 to 148 (NLTL…TFQD), 151 to 172 (SLRR…AFAG), 175 to 196 (ALEE…SLGH), 207 to 228 (HLAI…LHLE), 247 to 268 (NLTS…ALRH), 271 to 292 (HLTC…SFRD), 295 to 316 (RLRE…AFLG), and 319 to 340 (QIRL…TFHS). N-linked (GlcNAc...) asparagine glycosylation is present at asparagine 127. N-linked (GlcNAc...) asparagine glycosylation is present at asparagine 185. Asparagine 247, asparagine 257, and asparagine 276 each carry an N-linked (GlcNAc...) asparagine glycan. N-linked (GlcNAc...) asparagine glycosylation is present at asparagine 324. The 55-residue stretch at 352–406 (NPLACDCRLLWIVQRRKTLNFDGRLPACATPAEVRGDALRNLPDSVLFEYFVCRK) folds into the LRRCT domain. In terms of domain architecture, Ig-like C2-type spans 407 to 496 (PKIRERRLQR…GNDTYFATLT (90 aa)). Cysteine 429 and cysteine 480 form a disulfide bridge. Asparagine 488 and asparagine 512 each carry an N-linked (GlcNAc...) asparagine glycan. A helical transmembrane segment spans residues 532–552 (AMGCITFLGVVLFCFVLLFVW). Over 553–592 (SRGRGQHKNNFSVEYSFRKVDGPAAAAGQGGARKFNMKMI) the chain is Cytoplasmic.

The protein resides in the membrane. The protein is Leucine-rich repeat and immunoglobulin-like domain-containing nogo receptor-interacting protein 3 (LINGO3) of Homo sapiens (Human).